A 232-amino-acid chain; its full sequence is Small ribosomal subunit protein uS3 (232 aa).

The region spanning 39–107 (IRAFLKKKLY…EVNVNIKEER (69 aa)) is the KH type-2 domain. The tract at residues 211–232 (GVQPEKTEEEAPKKTRRARRGK) is disordered. The segment covering 213–223 (QPEKTEEEAPK) has biased composition (basic and acidic residues).

The protein belongs to the universal ribosomal protein uS3 family. In terms of assembly, part of the 30S ribosomal subunit. Forms a tight complex with proteins S10 and S14.

Binds the lower part of the 30S subunit head. Binds mRNA in the 70S ribosome, positioning it for translation. This is Small ribosomal subunit protein uS3 from Campylobacter concisus (strain 13826).